Here is a 415-residue protein sequence, read N- to C-terminus: Amylovoran biosynthesis protein AmsJ (415 aa).

It belongs to the polysaccharide pyruvyl transferase family.

It functions in the pathway glycan metabolism; exopolysaccharide biosynthesis. In terms of biological role, involved in the biosynthesis of amylovoran which functions as a virulence factor. The protein is Amylovoran biosynthesis protein AmsJ (amsJ) of Erwinia amylovora (Fire blight bacteria).